Reading from the N-terminus, the 613-residue chain is UvrABC system protein C (613 aa).

Positions E20–I98 constitute a GIY-YIG domain. A UVR domain is found at F209–I244.

This sequence belongs to the UvrC family. As to quaternary structure, interacts with UvrB in an incision complex.

Its subcellular location is the cytoplasm. Its function is as follows. The UvrABC repair system catalyzes the recognition and processing of DNA lesions. UvrC both incises the 5' and 3' sides of the lesion. The N-terminal half is responsible for the 3' incision and the C-terminal half is responsible for the 5' incision. The protein is UvrABC system protein C of Hydrogenovibrio crunogenus (strain DSM 25203 / XCL-2) (Thiomicrospira crunogena).